Reading from the N-terminus, the 129-residue chain is Small ribosomal subunit protein uS9 (129 aa).

It belongs to the universal ribosomal protein uS9 family.

The chain is Small ribosomal subunit protein uS9 from Chlorobium chlorochromatii (strain CaD3).